We begin with the raw amino-acid sequence, 347 residues long: 4-hydroxy-tetrahydrodipicolinate reductase 1, chloroplastic (347 aa).

The transit peptide at 1–51 (MATNGLMASSSVFLHRPRIAFASRTNQTVGKYGKGRVSFMGIGTRRLPVVL) directs the protein to the chloroplast. Serine 52 is modified (N-acetylserine). NAD(+) contacts are provided by residues 79–84 (GCSGKM), 171–173 (GTT), and 194–197 (SPQM). The active-site Proton donor/acceptor is the histidine 230. The active-site Proton donor is the lysine 234. 239 to 240 (GT) is a binding site for (S)-2,3,4,5-tetrahydrodipicolinate.

This sequence belongs to the DapB family.

It is found in the plastid. The protein localises to the chloroplast. The enzyme catalyses (S)-2,3,4,5-tetrahydrodipicolinate + NAD(+) + H2O = (2S,4S)-4-hydroxy-2,3,4,5-tetrahydrodipicolinate + NADH + H(+). The catalysed reaction is (S)-2,3,4,5-tetrahydrodipicolinate + NADP(+) + H2O = (2S,4S)-4-hydroxy-2,3,4,5-tetrahydrodipicolinate + NADPH + H(+). The protein operates within amino-acid biosynthesis; L-lysine biosynthesis via DAP pathway; (S)-tetrahydrodipicolinate from L-aspartate: step 4/4. Functionally, catalyzes the conversion of 4-hydroxy-tetrahydrodipicolinate (HTPA) to tetrahydrodipicolinate. The protein is 4-hydroxy-tetrahydrodipicolinate reductase 1, chloroplastic (DAPB1) of Arabidopsis thaliana (Mouse-ear cress).